The sequence spans 227 residues: ATP synthase F(0) complex subunit a (227 aa).

The next 6 membrane-spanning stretches (helical) occupy residues 12–32 (PTYL…ILFP), 69–89 (WAVL…LGLL), 98–118 (QLSL…IIGM), 132–152 (EGTP…SLFI), 180–200 (FVLM…LFLL), and 202–222 (LLEI…LSLY).

It belongs to the ATPase A chain family. In terms of assembly, component of the ATP synthase complex composed at least of ATP5F1A/subunit alpha, ATP5F1B/subunit beta, ATP5MC1/subunit c (homooctomer), MT-ATP6/subunit a, MT-ATP8/subunit 8, ATP5ME/subunit e, ATP5MF/subunit f, ATP5MG/subunit g, ATP5MK/subunit k, ATP5MJ/subunit j, ATP5F1C/subunit gamma, ATP5F1D/subunit delta, ATP5F1E/subunit epsilon, ATP5PF/subunit F6, ATP5PB/subunit b, ATP5PD/subunit d, ATP5PO/subunit OSCP. ATP synthase complex consists of a soluble F(1) head domain (subunits alpha(3) and beta(3)) - the catalytic core - and a membrane F(0) domain - the membrane proton channel (subunits c, a, 8, e, f, g, k and j). These two domains are linked by a central stalk (subunits gamma, delta, and epsilon) rotating inside the F1 region and a stationary peripheral stalk (subunits F6, b, d, and OSCP). Interacts with DNAJC30; interaction is direct.

It localises to the mitochondrion inner membrane. The catalysed reaction is H(+)(in) = H(+)(out). Subunit a, of the mitochondrial membrane ATP synthase complex (F(1)F(0) ATP synthase or Complex V) that produces ATP from ADP in the presence of a proton gradient across the membrane which is generated by electron transport complexes of the respiratory chain. ATP synthase complex consist of a soluble F(1) head domain - the catalytic core - and a membrane F(1) domain - the membrane proton channel. These two domains are linked by a central stalk rotating inside the F(1) region and a stationary peripheral stalk. During catalysis, ATP synthesis in the catalytic domain of F(1) is coupled via a rotary mechanism of the central stalk subunits to proton translocation. With the subunit c (ATP5MC1), forms the proton-conducting channel in the F(0) domain, that contains two crucial half-channels (inlet and outlet) that facilitate proton movement from the mitochondrial intermembrane space (IMS) into the matrix. Protons are taken up via the inlet half-channel and released through the outlet half-channel, following a Grotthuss mechanism. The polypeptide is ATP synthase F(0) complex subunit a (Salmo salar (Atlantic salmon)).